Here is a 330-residue protein sequence, read N- to C-terminus: Lipoyl synthase (330 aa).

7 residues coordinate [4Fe-4S] cluster: C77, C82, C88, C103, C107, C110, and S317. A Radical SAM core domain is found at 89 to 306; it reads FNHGTATFMI…RSEAEKMGFE (218 aa).

The protein belongs to the radical SAM superfamily. Lipoyl synthase family. It depends on [4Fe-4S] cluster as a cofactor.

It is found in the cytoplasm. The catalysed reaction is [[Fe-S] cluster scaffold protein carrying a second [4Fe-4S](2+) cluster] + N(6)-octanoyl-L-lysyl-[protein] + 2 oxidized [2Fe-2S]-[ferredoxin] + 2 S-adenosyl-L-methionine + 4 H(+) = [[Fe-S] cluster scaffold protein] + N(6)-[(R)-dihydrolipoyl]-L-lysyl-[protein] + 4 Fe(3+) + 2 hydrogen sulfide + 2 5'-deoxyadenosine + 2 L-methionine + 2 reduced [2Fe-2S]-[ferredoxin]. Its pathway is protein modification; protein lipoylation via endogenous pathway; protein N(6)-(lipoyl)lysine from octanoyl-[acyl-carrier-protein]: step 2/2. Catalyzes the radical-mediated insertion of two sulfur atoms into the C-6 and C-8 positions of the octanoyl moiety bound to the lipoyl domains of lipoate-dependent enzymes, thereby converting the octanoylated domains into lipoylated derivatives. This chain is Lipoyl synthase, found in Haemophilus ducreyi (strain 35000HP / ATCC 700724).